Reading from the N-terminus, the 834-residue chain is MEPRVRTVCFLFFLLRVLAEPAKNSDFYLPGDYLLGGLFTLHANMKGTVHLNFLQVPMCKEYEVKLSGYNLMQAMRFAVEEINNDSSLLPDVRLGYEMVDVCYVSNNVQPVLYFLAQEDNLLPIQEDYSNYVPRVVAVIGPENSESVTTVANFLSLFLLPQITYSAISDQLRDKQRFPALLRTTPSAKHHIEAMVQLMLHFRWNWISVLVSSDTYGRDNGQLLGDRLAGGDICIAFQETLPTLQPNQDMMPEDRQRLVSIVEKLQQSTARVVVVFSPDLTLYDFFREVLRQNFTGAVWIASESWAIDPVLHNLTGLHRTGTFLGITLQNVPIPGFNEFRVRGPQAGPTHQRSTCNQECDTCLNSTLSFNTILRLSGERVVYSVYSAVYAVAHALHSLLGCDHSACTKRGVYPWQLLEEIWKVNFSLLDHQIFFDPQGDVALHLEIVQWQWDLSQNPFQSVASYQPLQGHLKDIQDISWHTVNNTIPVSMCSKRCQSGQKKKPVGIHTCCFECIDCPPGTFLNQTANEYDCQACPSNEWSHQSETSCFKRRLSFLEWHEAATIAVALLAALGFLSTLAILVIFWRHFETPMVRSAGGPMCFLMLTLLLVAYMVVPVYVGLPKVSTCLCRQALFPVCFTICISCIAVRSFQIVCVFKMASRFPRAYSYWVRYQGSYVSVAFITALKMVTVVISLLATGLNPTTRTDTDDPKIMIISCNPNYRNSLLFNTSLDLLLSVAGFSFAYMGKELPTNYNEAKFITFSMTFYFTSSVSLCTFMSVYDGVLVTIVDLLVTVFNLLAISLGYFGPKCYMILFYPERNTPAYFNSMIQGYTMRRD.

Positions 1–19 (MEPRVRTVCFLFFLLRVLA) are cleaved as a signal peptide. Residues 20–561 (EPAKNSDFYL…SFLEWHEAAT (542 aa)) are Extracellular-facing. N-linked (GlcNAc...) asparagine glycosylation is found at Asn84, Asn292, Asn312, Asn363, Asn423, Asn482, and Asn522. The chain crosses the membrane as a helical span at residues 562–582 (IAVALLAALGFLSTLAILVIF). Topologically, residues 583 to 597 (WRHFETPMVRSAGGP) are cytoplasmic. Residues 598-618 (MCFLMLTLLLVAYMVVPVYVG) traverse the membrane as a helical segment. Residues 619 to 630 (LPKVSTCLCRQA) lie on the Extracellular side of the membrane. The chain crosses the membrane as a helical span at residues 631–651 (LFPVCFTICISCIAVRSFQIV). At 652–676 (CVFKMASRFPRAYSYWVRYQGSYVS) the chain is on the cytoplasmic side. A helical transmembrane segment spans residues 677-697 (VAFITALKMVTVVISLLATGL). The Extracellular portion of the chain corresponds to 698–722 (NPTTRTDTDDPKIMIISCNPNYRNS). The chain crosses the membrane as a helical span at residues 723–743 (LLFNTSLDLLLSVAGFSFAYM). At 744-755 (GKELPTNYNEAK) the chain is on the cytoplasmic side. Residues 756-776 (FITFSMTFYFTSSVSLCTFMS) traverse the membrane as a helical segment. The Extracellular segment spans residues 777–779 (VYD). A helical membrane pass occupies residues 780-800 (GVLVTIVDLLVTVFNLLAISL). Residues 801-834 (GYFGPKCYMILFYPERNTPAYFNSMIQGYTMRRD) lie on the Cytoplasmic side of the membrane.

It belongs to the G-protein coupled receptor 3 family. TAS1R subfamily. In terms of assembly, forms heterodimers with TAS1R3.

The protein resides in the cell membrane. Putative taste receptor. TAS1R2/TAS1R3 recognizes diverse natural and synthetic sweeteners. The protein is Taste receptor type 1 member 2 (TAS1R2) of Saimiri sciureus (Common squirrel monkey).